We begin with the raw amino-acid sequence, 708 residues long: O-antigen chain terminator bifunctional methyltransferase/kinase WbdD (708 aa).

The interval 1 to 210 (MTKDLNTLVS…VPRPMYLVSN (210 aa)) is methyltransferase. S-adenosyl-L-methionine is bound by residues 16–17 (YQ), Arg36, Gly61, 82–87 (DFQQEN), 108–111 (GRIE), and Leu128. The tract at residues 211–459 (HRVLINDFNQ…AKLPSAEQQR (249 aa)) is kinase. ATP-binding positions include Pro229, His237, 241–243 (RRY), Lys252, Glu274, 309–311 (EKL), Met358, and Asp369. The stretch at 485-594 (AGSEALRGQI…EIEKIHRSRS (110 aa)) forms a coiled coil. Residues 601–669 (YRYLGLQIHL…RLYRRMNPLP (69 aa)) form a required for membrane-binding region. Residues 687–708 (VMHPELLPPEVYEIYLKLTKNK) are required for localizing WbdA to the membrane.

This sequence belongs to the WbdD family. As to quaternary structure, interacts with WbdA.

The protein localises to the cell inner membrane. It carries out the reaction 3-O-phospho-alpha-D-Man-(1-&gt;2)-alpha-D-Man-(1-&gt;2)-[alpha-D-Man-(1-&gt;3)-alpha-D-Man-(1-&gt;3)-alpha-D-Man-(1-&gt;2)-alpha-D-Man-(1-&gt;2)](n)-alpha-D-Man-(1-&gt;3)-alpha-D-Man-(1-&gt;3)-alpha-D-Man-(1-&gt;3)-alpha-D-GlcNAc-di-trans,octa-cis-undecaprenyl diphosphate + S-adenosyl-L-methionine = 3-O-methylphospho-alpha-D-Man-(1-&gt;2)-alpha-D-Man-(1-&gt;2)-[alpha-D-Man-(1-&gt;3)-alpha-D-Man-(1-&gt;3)-alpha-D-Man-(1-&gt;2)-alpha-D-Man-(1-&gt;2)](n)-alpha-D-Man-(1-&gt;3)-alpha-D-Man-(1-&gt;3)-alpha-D-Man-(1-&gt;3)-alpha-D-GlcNAc-di-trans,octa-cis-undecaprenyl diphosphate + S-adenosyl-L-homocysteine. The enzyme catalyses alpha-D-Man-(1-&gt;2)-alpha-D-Man-(1-&gt;2)-[alpha-D-Man-(1-&gt;3)-alpha-D-Man-(1-&gt;3)-alpha-D-Man-(1-&gt;2)-alpha-D-Man-(1-&gt;2)](n)-alpha-D-Man-(1-&gt;3)-alpha-D-Man-(1-&gt;3)-alpha-D-Man-(1-&gt;3)-alpha-D-GlcNAc-di-trans,octa-cis-undecaprenyl diphosphate + ATP = 3-O-phospho-alpha-D-Man-(1-&gt;2)-alpha-D-Man-(1-&gt;2)-[alpha-D-Man-(1-&gt;3)-alpha-D-Man-(1-&gt;3)-alpha-D-Man-(1-&gt;2)-alpha-D-Man-(1-&gt;2)](n)-alpha-D-Man-(1-&gt;3)-alpha-D-Man-(1-&gt;3)-alpha-D-Man-(1-&gt;3)-alpha-D-GlcNAc-di-trans,octa-cis-undecaprenyl diphosphate + ADP + H(+). It functions in the pathway bacterial outer membrane biogenesis; LPS O-antigen biosynthesis. Its function is as follows. Regulates the length of the LPS O-antigen polysaccharide chain. Stops the polymerization of the chain by phosphorylating and then methylating the phosphate on the terminal sugar. This terminal modification is essential for export of the O-antigen across the inner membrane. WbdD is also required for correct localization of the WbdA mannosyltransferase. This chain is O-antigen chain terminator bifunctional methyltransferase/kinase WbdD, found in Escherichia coli.